Consider the following 468-residue polypeptide: ATP synthase subunit beta (468 aa).

An ATP-binding site is contributed by glycine 155 to threonine 162.

The protein belongs to the ATPase alpha/beta chains family. F-type ATPases have 2 components, CF(1) - the catalytic core - and CF(0) - the membrane proton channel. CF(1) has five subunits: alpha(3), beta(3), gamma(1), delta(1), epsilon(1). CF(0) has three main subunits: a(1), b(2) and c(9-12). The alpha and beta chains form an alternating ring which encloses part of the gamma chain. CF(1) is attached to CF(0) by a central stalk formed by the gamma and epsilon chains, while a peripheral stalk is formed by the delta and b chains.

The protein resides in the cell membrane. It carries out the reaction ATP + H2O + 4 H(+)(in) = ADP + phosphate + 5 H(+)(out). Its function is as follows. Produces ATP from ADP in the presence of a proton gradient across the membrane. The catalytic sites are hosted primarily by the beta subunits. The sequence is that of ATP synthase subunit beta from Streptococcus pyogenes serotype M3 (strain ATCC BAA-595 / MGAS315).